The sequence spans 516 residues: MAFESLTERLQGVFKNLRGKRKLSEKDVQEVTKEIRLALLEADVALPVVKEFIKRVRKRAVGHEVIDTLDPSQQIIKIVNEELTAVLGSETAEIEKSSKIPTIIMMVGLQGAGKTTFAGKLANKLVKEENARPLMIAADIYRPAAIDQLKTLGQQINVPVFDMGTEHSAVEIVSQGLAQAKENRNDYVLIDTAGRLQIDEKLMTELRDIKALANPNEILLVVDSMIGQEAANVAREFNQQLEVTGVILTKIDGDTRGGAALSVRQITGKPIKFTGTGEKITDIETFHPDRMSSRILGMGDLLTLIEKASQDYDEQKSAELAEKMRENSFDFNDFIEQLDQVQNMGSMEDILKMIPGMANNPALANVKVDEGEIARKRAIVSSMTPEERENPDLLTPSRRRRIASGSGNTFVNVNKFIKDFNQAKKMMQGVMSGDMNKVMKQMGINPNNMPKNMDSSALEGMMGQGGMPDMSELSGTNMDVSQMFGGGLKGKVGEFAMKQSMKKMAKRMKKAKKRKK.

Residues 108 to 115 (GLQGAGKT), 191 to 195 (DTAGR), and 249 to 252 (TKID) each bind GTP. A disordered region spans residues 383-405 (MTPEERENPDLLTPSRRRRIASG).

Belongs to the GTP-binding SRP family. SRP54 subfamily. Part of the signal recognition particle protein translocation system, which is composed of SRP and FtsY.

It localises to the cytoplasm. It carries out the reaction GTP + H2O = GDP + phosphate + H(+). Functionally, involved in targeting and insertion of nascent membrane proteins into the cytoplasmic membrane. Binds to the hydrophobic signal sequence of the ribosome-nascent chain (RNC) as it emerges from the ribosomes. The SRP-RNC complex is then targeted to the cytoplasmic membrane where it interacts with the SRP receptor FtsY. This chain is Signal recognition particle protein, found in Streptococcus mutans serotype c (strain ATCC 700610 / UA159).